The primary structure comprises 250 residues: 2-C-methyl-D-erythritol 4-phosphate cytidylyltransferase (250 aa).

Belongs to the IspD/TarI cytidylyltransferase family. IspD subfamily.

The catalysed reaction is 2-C-methyl-D-erythritol 4-phosphate + CTP + H(+) = 4-CDP-2-C-methyl-D-erythritol + diphosphate. It participates in isoprenoid biosynthesis; isopentenyl diphosphate biosynthesis via DXP pathway; isopentenyl diphosphate from 1-deoxy-D-xylulose 5-phosphate: step 2/6. In terms of biological role, catalyzes the formation of 4-diphosphocytidyl-2-C-methyl-D-erythritol from CTP and 2-C-methyl-D-erythritol 4-phosphate (MEP). The chain is 2-C-methyl-D-erythritol 4-phosphate cytidylyltransferase from Streptomyces avermitilis (strain ATCC 31267 / DSM 46492 / JCM 5070 / NBRC 14893 / NCIMB 12804 / NRRL 8165 / MA-4680).